We begin with the raw amino-acid sequence, 20 residues long: Protein YfiS (20 aa).

The chain is Protein YfiS from Escherichia coli (strain K12).